Here is a 440-residue protein sequence, read N- to C-terminus: Ran-specific GTPase-activating protein 30 (440 aa).

The 314-residue stretch at 1–314 (MDEILAKAGS…LVLKIDRSDD (314 aa)) folds into the RanBD1 domain. A Phosphothreonine modification is found at Thr272. Over residues 341 to 371 (IEEDEEEDEEEDEEEGKDGEERKEEEEEENK) the composition is skewed to acidic residues. Residues 341-375 (IEEDEEEDEEEDEEEGKDGEERKEEEEEENKLEDK) form a disordered region.

As to quaternary structure, interacts with GSP1.

Its subcellular location is the cytoplasm. It is found in the nucleus. Functionally, important for the export of protein containing nuclear export signal (NES) out of the nucleus. Stimulates the GTPase activity of GSP1. The polypeptide is Ran-specific GTPase-activating protein 30 (YRB30) (Saccharomyces cerevisiae (strain ATCC 204508 / S288c) (Baker's yeast)).